Reading from the N-terminus, the 469-residue chain is Phosphoenolpyruvate carboxylase (469 aa).

The protein belongs to the PEPCase type 2 family. Homotetramer. Mg(2+) is required as a cofactor.

It carries out the reaction oxaloacetate + phosphate = phosphoenolpyruvate + hydrogencarbonate. Its function is as follows. Catalyzes the irreversible beta-carboxylation of phosphoenolpyruvate (PEP) to form oxaloacetate (OAA), a four-carbon dicarboxylic acid source for the tricarboxylic acid cycle. The sequence is that of Phosphoenolpyruvate carboxylase from Pyrococcus horikoshii (strain ATCC 700860 / DSM 12428 / JCM 9974 / NBRC 100139 / OT-3).